Here is a 110-residue protein sequence, read N- to C-terminus: Large ribosomal subunit protein uL22 (110 aa).

This sequence belongs to the universal ribosomal protein uL22 family. As to quaternary structure, part of the 50S ribosomal subunit.

Its function is as follows. This protein binds specifically to 23S rRNA; its binding is stimulated by other ribosomal proteins, e.g. L4, L17, and L20. It is important during the early stages of 50S assembly. It makes multiple contacts with different domains of the 23S rRNA in the assembled 50S subunit and ribosome. The globular domain of the protein is located near the polypeptide exit tunnel on the outside of the subunit, while an extended beta-hairpin is found that lines the wall of the exit tunnel in the center of the 70S ribosome. This chain is Large ribosomal subunit protein uL22, found in Enterobacter sp. (strain 638).